The chain runs to 123 residues: MFMKQLVKHLIIAGFSAAILSFLISFDAVYTGFSSSFGGTLSHFFIHSFLLIGLPLALFTDAVHRILHLKRTHTLFTKLGLYATVVYVSWDSAVWLAAAMAVYFLIECAFFPVGRAKETTISM.

The next 3 membrane-spanning stretches (helical) occupy residues Val-7–Val-29, Phe-44–Ile-66, and Leu-79–Ala-101.

It localises to the cell membrane. This is an uncharacterized protein from Bacillus subtilis (strain 168).